Reading from the N-terminus, the 488-residue chain is UDP-N-acetylmuramate--L-alanine ligase (488 aa).

122–128 (GTHGKTT) contacts ATP.

Belongs to the MurCDEF family.

It is found in the cytoplasm. It carries out the reaction UDP-N-acetyl-alpha-D-muramate + L-alanine + ATP = UDP-N-acetyl-alpha-D-muramoyl-L-alanine + ADP + phosphate + H(+). Its pathway is cell wall biogenesis; peptidoglycan biosynthesis. Functionally, cell wall formation. The protein is UDP-N-acetylmuramate--L-alanine ligase of Mycobacterium ulcerans (strain Agy99).